The following is an 852-amino-acid chain: Tiger protein I3 (852 aa).

The first 18 residues, Met-1–Ser-18, serve as a signal peptide directing secretion. Residues Tyr-19 to Asn-830 are Extracellular-facing. Asn-31, Asn-47, Asn-67, Asn-97, Asn-129, Asn-201, Asn-215, Asn-228, Asn-260, Asn-323, Asn-352, Asn-356, Asn-404, Asn-441, Asn-476, Asn-483, Asn-501, Asn-512, Asn-574, Asn-592, Asn-635, Asn-658, Asn-661, Asn-679, Asn-680, Asn-723, Asn-757, Asn-761, Asn-773, Asn-785, and Asn-800 each carry an N-linked (GlcNAc...) asparagine glycan. One can recognise an IPT/TIG domain in the interval Ile-290–Asp-367. A helical membrane pass occupies residues Ile-831–Asn-851. Ile-852 is a topological domain (cytoplasmic).

The protein resides in the membrane. This chain is Tiger protein I3 (tgrI3), found in Dictyostelium discoideum (Social amoeba).